The following is a 195-amino-acid chain: NAD(P)H-quinone oxidoreductase subunit J, chloroplastic (195 aa).

This sequence belongs to the complex I 30 kDa subunit family. As to quaternary structure, NDH is composed of at least 16 different subunits, 5 of which are encoded in the nucleus.

It is found in the plastid. The protein resides in the chloroplast thylakoid membrane. It carries out the reaction a plastoquinone + NADH + (n+1) H(+)(in) = a plastoquinol + NAD(+) + n H(+)(out). The enzyme catalyses a plastoquinone + NADPH + (n+1) H(+)(in) = a plastoquinol + NADP(+) + n H(+)(out). Its function is as follows. NDH shuttles electrons from NAD(P)H:plastoquinone, via FMN and iron-sulfur (Fe-S) centers, to quinones in the photosynthetic chain and possibly in a chloroplast respiratory chain. The immediate electron acceptor for the enzyme in this species is believed to be plastoquinone. Couples the redox reaction to proton translocation, and thus conserves the redox energy in a proton gradient. In Chlorokybus atmophyticus (Soil alga), this protein is NAD(P)H-quinone oxidoreductase subunit J, chloroplastic.